The primary structure comprises 130 residues: Large ribosomal subunit protein bL17 (130 aa).

The protein belongs to the bacterial ribosomal protein bL17 family. As to quaternary structure, part of the 50S ribosomal subunit. Contacts protein L32.

The polypeptide is Large ribosomal subunit protein bL17 (Nitrosomonas eutropha (strain DSM 101675 / C91 / Nm57)).